The following is a 361-amino-acid chain: 45 kDa calcium-binding protein (361 aa).

Positions 1 to 35 are cleaved as a signal peptide; the sequence is MVWLVAMTSRQRSLCGLAAHGLWFLGLVLLMDATA. Residue Asn-39 is glycosylated (N-linked (GlcNAc...) asparagine). EF-hand domains follow at residues 97 to 132 and 136 to 171; these read RSRR…KTAE and EAVK…SKGH. Residue Ser-98 is modified to Phosphoserine. Asp-110, Asn-112, Asp-114, Arg-116, Glu-121, Asp-149, Asp-151, Asp-153, His-155, and Glu-160 together coordinate Ca(2+). Thr-192 is modified (phosphothreonine). 4 EF-hand domains span residues 196 to 231, 232 to 267, 277 to 312, and 313 to 348; these read LGNL…HSRG, MLKF…TVEN, WVKD…MNEY, and NALN…FTGS. Position 212 (Asp-212) interacts with Ca(2+). Thr-216 is subject to Phosphothreonine. 6 residues coordinate Ca(2+): Glu-219, Asp-245, Asp-247, Asp-249, Gln-251, and Glu-256. At Thr-264 the chain carries Phosphothreonine. 3 residues coordinate Ca(2+): Asp-290, Asn-292, and Asp-294. Phosphothreonine is present on Thr-298. Ca(2+) is bound by residues Glu-301, Asp-326, Asn-328, Asn-330, His-332, and Glu-337. A necessary for intracellular retention in Golgi apparatus lumen region spans residues 308-361; the sequence is PMNEYNALNEAKQMIAIADENQNHHLEPEEILKYSEFFTGSKLMDYARNVHEEF.

This sequence belongs to the CREC family. As to quaternary structure, a membrane-associated isoform interacts with STX3 and STXBP1. A membrane-associated isoform is expressed in acini of the pancreas (at protein level). Ubiquitous.

Its subcellular location is the golgi apparatus lumen. A membrane-associated isoform may be involved in the exocytosis of zymogens by pancreatic acini. May regulate calcium-dependent activities in the endoplasmic reticulum lumen or post-ER compartment. This is 45 kDa calcium-binding protein (Sdf4) from Rattus norvegicus (Rat).